The sequence spans 947 residues: Zinc finger CCCH domain-containing protein 18 (947 aa).

An N-acetylmethionine modification is found at methionine 1. Disordered stretches follow at residues 1 to 218 (MDVA…PRPT), 275 to 295 (GGPV…TESA), and 387 to 921 (YTEA…TLSR). 9 positions are modified to phosphoserine: serine 6, serine 32, serine 44, serine 57, serine 63, serine 70, serine 74, serine 79, and serine 91. The span at 73–85 (KSQDQDSEAHELS) shows a compositional bias: basic and acidic residues. The span at 94–104 (EEGDDAEEDGT) shows a compositional bias: acidic residues. Threonine 104 carries the post-translational modification Phosphothreonine. A phosphoserine mark is found at serine 105 and serine 113. The span at 105–119 (SDLRDEASSVTRELD) shows a compositional bias: basic and acidic residues. Composition is skewed to acidic residues over residues 120–131 (EHELDYDEEVPE) and 138–153 (QEEE…EEEK). Over residues 160–185 (EEGKPDVQSVGEKEPTEAAKEKKKED) the composition is skewed to basic and acidic residues. Serine 168 is subject to Phosphoserine. Positions 186–202 (DDGEIDDGEIDDDDLEE) are enriched in acidic residues. Over residues 203–212 (GEVKDPSDRK) the composition is skewed to basic and acidic residues. A C3H1-type zinc finger spans residues 214–240 (RPRPTCRFFMKGNCTWGMNCRFIHPGV). The span at 391 to 479 (EPYHNYRDRE…DRDKDKEKPK (89 aa)) shows a compositional bias: basic and acidic residues. Serine 482 carries the post-translational modification Phosphoserine. Lysine 505 is covalently cross-linked (Glycyl lysine isopeptide (Lys-Gly) (interchain with G-Cter in SUMO2)). Residues 505-515 (KRADEWKDPWR) are compositionally biased toward basic and acidic residues. A phosphoserine mark is found at serine 527, serine 529, and serine 531. A compositionally biased stretch (low complexity) spans 540 to 601 (SASSASASNS…SRSRSFSSSP (62 aa)). The segment covering 602 to 611 (SPSPTPSPHR) has biased composition (pro residues). Residues lysine 617 and lysine 656 each participate in a glycyl lysine isopeptide (Lys-Gly) (interchain with G-Cter in SUMO2) cross-link. Residues 656-665 (KPGDLREARR) show a composition bias toward basic and acidic residues. 2 stretches are compositionally biased toward low complexity: residues 687–720 (GSSY…SVHS) and 731–745 (ASPV…PTPA). The span at 755 to 769 (KKEDGVREEKRKRDP) shows a compositional bias: basic and acidic residues. Residues 773 to 804 (PPKSSKAPAGGKASQQAAAPQQAAPGQPQQGS) show a composition bias toward low complexity. Position 809 is an N6-acetyllysine (lysine 809). A Glycyl lysine isopeptide (Lys-Gly) (interchain with G-Cter in SUMO2) cross-link involves residue lysine 812. Over residues 819–836 (AAEKGSRKRYEPSDKDRQ) the composition is skewed to basic and acidic residues. A phosphoserine mark is found at serine 837, serine 846, serine 862, serine 887, and serine 890. Residues 887–918 (SPQSKSSSKVTSVPGKATDTATAGTKSGKAST) are compositionally biased toward low complexity. Residue lysine 902 forms a Glycyl lysine isopeptide (Lys-Gly) (interchain with G-Cter in SUMO2) linkage. A coiled-coil region spans residues 915–944 (KASTLSRREELLKQLKAVEDAIARKRAKIP).

In terms of assembly, interacts with ZFC3H1 in a RNase-insensitive manner.

The protein localises to the nucleus. The protein is Zinc finger CCCH domain-containing protein 18 (Zc3h18) of Rattus norvegicus (Rat).